The chain runs to 208 residues: Large ribosomal subunit protein uL3 (208 aa).

Positions 116–148 (GFQGVIKRHGQSRGPMAHGSRYHRRPGSMGPVA) are disordered.

The protein belongs to the universal ribosomal protein uL3 family. Part of the 50S ribosomal subunit. Forms a cluster with proteins L14 and L19.

Functionally, one of the primary rRNA binding proteins, it binds directly near the 3'-end of the 23S rRNA, where it nucleates assembly of the 50S subunit. The sequence is that of Large ribosomal subunit protein uL3 from Streptococcus pneumoniae (strain Hungary19A-6).